A 183-amino-acid polypeptide reads, in one-letter code: Ribosome maturation factor RimM (183 aa).

The region spanning 103 to 183 (EEGDYYWKDL…SIEVDWDPGF (81 aa)) is the PRC barrel domain.

This sequence belongs to the RimM family. As to quaternary structure, binds ribosomal protein uS19.

It localises to the cytoplasm. Its function is as follows. An accessory protein needed during the final step in the assembly of 30S ribosomal subunit, possibly for assembly of the head region. Essential for efficient processing of 16S rRNA. May be needed both before and after RbfA during the maturation of 16S rRNA. It has affinity for free ribosomal 30S subunits but not for 70S ribosomes. The polypeptide is Ribosome maturation factor RimM (Escherichia coli O157:H7 (strain EC4115 / EHEC)).